The primary structure comprises 130 residues: Large ribosomal subunit protein bL17 (130 aa).

It belongs to the bacterial ribosomal protein bL17 family. Part of the 50S ribosomal subunit. Contacts protein L32.

The protein is Large ribosomal subunit protein bL17 of Paraburkholderia xenovorans (strain LB400).